A 119-amino-acid polypeptide reads, in one-letter code: Large ribosomal subunit protein bL19 (119 aa).

It belongs to the bacterial ribosomal protein bL19 family.

This protein is located at the 30S-50S ribosomal subunit interface and may play a role in the structure and function of the aminoacyl-tRNA binding site. This is Large ribosomal subunit protein bL19 from Pelobacter propionicus (strain DSM 2379 / NBRC 103807 / OttBd1).